A 291-amino-acid polypeptide reads, in one-letter code: Peptide methionine sulfoxide reductase MsrB/MsrA (291 aa).

In terms of domain architecture, MsrB spans 1-124 (MLANLQHLSD…NSAALRFVAR (124 aa)). The Nucleophile role is filled by C113. Positions 127-284 (GTALFAAGCF…PGGYCHVSLH (158 aa)) are peptide methionine sulfoxide reductase A. C135 is an active-site residue.

In the N-terminal section; belongs to the MsrB Met sulfoxide reductase family. The protein in the C-terminal section; belongs to the MsrA Met sulfoxide reductase family.

The catalysed reaction is L-methionyl-[protein] + [thioredoxin]-disulfide + H2O = L-methionyl-(R)-S-oxide-[protein] + [thioredoxin]-dithiol. The enzyme catalyses L-methionyl-[protein] + [thioredoxin]-disulfide + H2O = L-methionyl-(S)-S-oxide-[protein] + [thioredoxin]-dithiol. It carries out the reaction [thioredoxin]-disulfide + L-methionine + H2O = L-methionine (S)-S-oxide + [thioredoxin]-dithiol. Has an important function as a repair enzyme for proteins that have been inactivated by oxidation. Catalyzes the reversible oxidation-reduction of methionine sulfoxide in proteins to methionine. The protein is Peptide methionine sulfoxide reductase MsrB/MsrA (msrAB) of Treponema pallidum (strain Nichols).